The following is a 1895-amino-acid chain: 1,3-beta-glucan synthase component GSC2 (1895 aa).

Polar residues-rich tracts occupy residues 1–16 and 25–34; these read MSYNDPNLNGQYYSNG and PTYQVTQDQS. Disordered regions lie at residues 1–143 and 269–292; these read MSYN…PYGN and ARKAKKKNKKAMQEASPEDTEETL. Over 1-473 the chain is Extracellular; it reads MSYNDPNLNG…WLHLVTNFNR (473 aa). The segment covering 65–78 has biased composition (low complexity); sequence QFPQGQDPSQDQGP. Polar residues-rich tracts occupy residues 79–107 and 115–141; these read YNNDASYYNQPPNMMNPSSQDGENFSDFS and TYPNDQYTPSQMSYPDQDGSSGASTPY. The segment covering 269–278 has biased composition (basic residues); sequence ARKAKKKNKK. A Glycyl lysine isopeptide (Lys-Gly) (interchain with G-Cter in ubiquitin) cross-link involves residue lysine 278. 2 positions are modified to phosphothreonine: threonine 288 and threonine 291. Lysine 405 participates in a covalent cross-link: Glycyl lysine isopeptide (Lys-Gly) (interchain with G-Cter in ubiquitin). Residues 474-494 traverse the membrane as a helical segment; sequence IWIMHISVYWMYCAYNAPTFY. Residues 495–511 are Cytoplasmic-facing; that stretch reads THNYQQLVDNQPLAAYK. A helical membrane pass occupies residues 512-532; sequence WATAALGGTVASLIQVAATLC. At 533–550 the chain is on the extracellular side; sequence EWSFVPRKWAGAQHLSRR. A helical membrane pass occupies residues 551-571; the sequence is FWFLCVIMGINLGPVIFVFAY. At 572-582 the chain is on the cytoplasmic side; that stretch reads DKDTVYSTAAH. A helical transmembrane segment spans residues 583-603; sequence VVGAVMFFVAVATLVFFSVMP. At 604–1579 the chain is on the extracellular side; the sequence is LGGLFTSYMK…DASRAHRTNL (976 aa). Glycyl lysine isopeptide (Lys-Gly) (interchain with G-Cter in ubiquitin) cross-links involve residues lysine 929, lysine 934, lysine 1558, and lysine 1566. Residues 1580–1600 traverse the membrane as a helical segment; sequence IMAEIIPCAIYAAGCFIAFTF. The Cytoplasmic segment spans residues 1601–1620; it reads INAQTGVKTTDEDRVNSTLR. The chain crosses the membrane as a helical span at residues 1621–1641; that stretch reads IIICTLAPIVIDIGVLFFCMG. Over 1642–1758 the chain is Extracellular; that stretch reads LSCCSGPLLG…LTAKVIELSE (117 aa). Residues 1759 to 1779 traverse the membrane as a helical segment; the sequence is FAADFVLGHVILIFQLPVICI. Topologically, residues 1780–1821 are cytoplasmic; sequence PKIDKFHSIMLFWLKPSRQIRPPIYSLKQARLRKRMVRRYCS. The helical transmembrane segment at 1822-1842 threads the bilayer; sequence LYFLVLIIFAGCIVGPAVASA. Over 1843-1895 the chain is Extracellular; sequence HVPKDLGSGLTGTFHNLVQPRNVSNNDTGSQMSTYKSHYYTHTPSLKTWSTIK.

This sequence belongs to the glycosyltransferase 48 family. As to quaternary structure, component of the 1,3-beta-glucan synthase (GS) complex, composed of two alternate catalytic subunits FKS1 or GSC2, and a regulatory subunit RHO1. Interacts with SMK1.

It is found in the membrane. It carries out the reaction [(1-&gt;3)-beta-D-glucosyl](n) + UDP-alpha-D-glucose = [(1-&gt;3)-beta-D-glucosyl](n+1) + UDP + H(+). Functionally, alternate catalytic subunit of the 1,3-beta-glucan synthase (GS) complex. Synthesizes 1,3-beta-glucan, a major structural component of the yeast cell wall. Required for spore wall assembly. Negative regulation of activity by SMK1 is important for spore wall deposition. Activity is positively regulated by RHO1. The sequence is that of 1,3-beta-glucan synthase component GSC2 from Saccharomyces cerevisiae (strain ATCC 204508 / S288c) (Baker's yeast).